Here is a 693-residue protein sequence, read N- to C-terminus: Heat shock protein homolog SSE2 (693 aa).

The segment at 653–693 (LRANQETSKMNDIAEKLAEQRRARAASDDSDDNNDENMDLD) is disordered. The span at 664-679 (DIAEKLAEQRRARAAS) shows a compositional bias: basic and acidic residues. Over residues 680–693 (DDSDDNNDENMDLD) the composition is skewed to acidic residues.

This sequence belongs to the heat shock protein 70 family.

In terms of biological role, has a calcium-dependent calmodulin-binding activity. This is Heat shock protein homolog SSE2 (SSE2) from Saccharomyces cerevisiae (strain ATCC 204508 / S288c) (Baker's yeast).